The following is a 1096-amino-acid chain: Phospholipase D zeta 1 (1096 aa).

An N-acetylalanine modification is found at Ala-2. Residues 50–204 (PKAVIVSVSR…REVCRFLEVS (155 aa)) form the PX domain. Residues 131-152 (VQDEDADEVPLHQDESAKNRDV) form a disordered region. Residues 139 to 151 (VPLHQDESAKNRD) are compositionally biased toward basic and acidic residues. In terms of domain architecture, PH spans 234-342 (DDSNRCCGCC…WVASINDAAL (109 aa)). The PLD phosphodiesterase 1 domain maps to 477–504 (YLWSHHEKLVIVDNQVCFIGGLDLCFGR). Active-site residues include His-482, Lys-484, and Asp-489. The span at 607–632 (GRQEESDIESKKEEDSIRGIRRDDSF) shows a compositional bias: basic and acidic residues. The tract at residues 607-691 (GRQEESDIES…DGDTPMRGFV (85 aa)) is disordered. The 28-residue stretch at 892-919 (SQVYVHSKIMIVDDRAALIGSANINDRS) folds into the PLD phosphodiesterase 2 domain. Active-site residues include His-897, Lys-899, and Asp-904.

This sequence belongs to the phospholipase D family. PXPH-PLD subfamily. Does not require Ca(2+) or any other cation for activity. serves as cofactor. Expressed in inflorescences, flowers, siliques, stems, leaves, and roots. Highest expression in roots.

The protein localises to the cytoplasmic vesicle. It carries out the reaction a 1,2-diacyl-sn-glycero-3-phosphocholine + H2O = a 1,2-diacyl-sn-glycero-3-phosphate + choline + H(+). Calcium-independent and PIP2-dependent. Its function is as follows. Hydrolyzes glycerol-phospholipids at the terminal phosphodiesteric bond to generate phosphatidic acids (PA). Phosphatidylcholine-selective. Regulates root-hair morphogenesis. Contributes to the supply of inorganic phosphorus for cell metabolism and diacylglycerol moieties for galactolipid synthesis in phosphorus-starved roots. Involved in root elongation during phosphate limitation. The protein is Phospholipase D zeta 1 of Arabidopsis thaliana (Mouse-ear cress).